We begin with the raw amino-acid sequence, 325 residues long: MAASCVLLHTGQKMPLIGLGTWKSEPGQVKAAIKYALTVGYRHIDCAAIYGNELEIGEALQETVGPGKAVPREELFVTSKLWNTKHHPEDVEPALRKTLADLQLEYLDLYLMHWPYAFERGDNPFPKNADGTIRYDATHYKDTWKALEALVAKGLVRALGLSNFSSRQIDDVLSVASVRPAVLQVECHPYLAQNELIAHCQARGLEVTAYSPLGSSDRAWRDPNEPVLLEEPVVQALAEKYNRSPAQILLRWQVQRKVICIPKSVTPSRILQNIQVFDFTFSPEEMKQLDALNKNLRFIVPMLTVDGKRVPRDAGHPLYPFNDPY.

Alanine 2 carries the N-acetylalanine modification. A Phosphoserine modification is found at serine 4. NADP(+) contacts are provided by residues 11-20 (GQKMPLIGLG), threonine 21, tryptophan 22, and aspartate 45. Tyrosine 50 (proton donor) is an active-site residue. Lysine 127 is modified (N6-acetyllysine; alternate). An N6-succinyllysine; alternate modification is found at lysine 127. At lysine 145 the chain carries N6-succinyllysine. Serine 162, asparagine 163, serine 211, leucine 213, serine 215, serine 216, lysine 263, serine 264, valine 265, threonine 266, arginine 269, glutamine 272, and asparagine 273 together coordinate NADP(+). Serine 211 carries the post-translational modification Phosphoserine.

The protein belongs to the aldo/keto reductase family. As to quaternary structure, monomer.

It localises to the cytoplasm. It is found in the cytosol. The protein resides in the apical cell membrane. It catalyses the reaction a primary alcohol + NADP(+) = an aldehyde + NADPH + H(+). It carries out the reaction glycerol + NADP(+) = D-glyceraldehyde + NADPH + H(+). The enzyme catalyses glycerol + NADP(+) = L-glyceraldehyde + NADPH + H(+). The catalysed reaction is L-gulonate + NADP(+) = aldehydo-D-glucuronate + NADPH + H(+). It catalyses the reaction L-gulono-1,4-lactone + NADP(+) = D-glucurono-3,6-lactone + NADPH + H(+). It carries out the reaction allyl alcohol + NADP(+) = acrolein + NADPH + H(+). The enzyme catalyses hydroxyacetone + NADP(+) = methylglyoxal + NADPH + H(+). The catalysed reaction is 3-deoxyfructose + NADP(+) = 3-deoxyglucosone + NADPH + H(+). It catalyses the reaction (R)-mevalonate + NADP(+) = (R)-mevaldate + NADPH + H(+). It carries out the reaction pyridine 3-methanol + NADP(+) = pyridine-3-carbaldehyde + NADPH + H(+). The enzyme catalyses S-nitroso-CoA + NADPH + H(+) = sulfinamide-CoA + NADP(+). The catalysed reaction is S-nitrosoglutathione + NADPH + H(+) = S-(hydroxysulfenamide)glutathione + NADP(+). Catalyzes the NADPH-dependent reduction of a wide variety of carbonyl-containing compounds to their corresponding alcohols. Displays enzymatic activity towards endogenous metabolites such as aromatic and aliphatic aldehydes, ketones, monosaccharides and bile acids, with a preference for negatively charged substrates, such as glucuronate and succinic semialdehyde. Plays an important role in ascorbic acid biosynthesis by catalyzing the reduction of D-glucuronic acid and D-glucurono-gamma-lactone. Functions as a detoxifiying enzyme by reducing a range of toxic aldehydes. Reduces methylglyoxal and 3-deoxyglucosone, which are present at elevated levels under hyperglycemic conditions and are cytotoxic. Involved also in the detoxification of lipid-derived aldehydes like acrolein. Plays a role in the activation of procarcinogens, such as polycyclic aromatic hydrocarbon trans-dihydrodiols, and in the metabolism of various xenobiotics and drugs. Also acts as an inhibitor of protein S-nitrosylation by mediating degradation of S-nitroso-coenzyme A (S-nitroso-CoA), a cofactor required to S-nitrosylate proteins. S-nitroso-CoA reductase activity is involved in reprogramming intermediary metabolism in renal proximal tubules, notably by inhibiting protein S-nitrosylation of isoform 2 of PKM (PKM2). Also acts as a S-nitroso-glutathione reductase by catalyzing the NADPH-dependent reduction of S-nitrosoglutathione. Displays no reductase activity towards retinoids. This is Aldo-keto reductase family 1 member A1 (AKR1A1) from Sus scrofa (Pig).